The chain runs to 350 residues: ATPase GET3 (350 aa).

26 to 33 is an ATP binding site; it reads KGGVGKTT. Aspartate 57 is an active-site residue. The ATP site is built by glutamate 243 and asparagine 270. Zn(2+) contacts are provided by cysteine 282 and cysteine 285.

It belongs to the arsA ATPase family. Homodimer. Component of the Golgi to ER traffic (GET) complex, which is composed of GET1, GET2 and GET3. Within the complex, GET1 and GET2 form a heterotetramer which is stabilized by phosphatidylinositol binding and which binds to the GET3 homodimer. Interacts with the chloride channel protein GEF1.

The protein localises to the cytoplasm. Its subcellular location is the endoplasmic reticulum. It localises to the golgi apparatus. Its function is as follows. ATPase required for the post-translational delivery of tail-anchored (TA) proteins to the endoplasmic reticulum. Recognizes and selectively binds the transmembrane domain of TA proteins in the cytosol. This complex then targets to the endoplasmic reticulum by membrane-bound receptors GET1 and GET2, where the tail-anchored protein is released for insertion. This process is regulated by ATP binding and hydrolysis. ATP binding drives the homodimer towards the closed dimer state, facilitating recognition of newly synthesized TA membrane proteins. ATP hydrolysis is required for insertion. Subsequently, the homodimer reverts towards the open dimer state, lowering its affinity for the GET1-GET2 receptor, and returning it to the cytosol to initiate a new round of targeting. Cooperates with the HDEL receptor ERD2 to mediate the ATP-dependent retrieval of resident ER proteins that contain a C-terminal H-D-E-L retention signal from the Golgi to the ER. Involved in low-level resistance to the oxyanions arsenite and arsenate, and in heat tolerance. This is ATPase GET3 from Candida dubliniensis (strain CD36 / ATCC MYA-646 / CBS 7987 / NCPF 3949 / NRRL Y-17841) (Yeast).